Reading from the N-terminus, the 1348-residue chain is Kinesin-like protein KIF7 (1348 aa).

The 335-residue stretch at 15 to 349 (PVRVALRVRP…LNYASRAQNI (335 aa)) folds into the Kinesin motor domain. 94 to 101 (GQTGSGKT) contacts ATP. The segment at 358-479 (HPEAERVPEE…EDQAAQGTSG (122 aa)) is interaction with DLG5. The segment at 358 to 1211 (HPEAERVPEE…LGRHMWINQE (854 aa)) is interaction with SMO. 2 disordered regions span residues 451-486 (RSTL…DEGT) and 607-674 (AQAD…VCPE). A coiled-coil region spans residues 480–542 (RKGDEGTQQL…ELRLRLELAQ (63 aa)). Positions 620–636 (SEEEGEEEEEEEEEEEE) are enriched in acidic residues. Coiled-coil stretches lie at residues 698-1057 (APAA…IEAL) and 1109-1211 (FDKV…INQE). S903 bears the Phosphoserine mark. 2 disordered regions span residues 1288–1314 (LCSE…VLPM) and 1328–1348 (KPRW…KNPL).

The protein belongs to the TRAFAC class myosin-kinesin ATPase superfamily. Kinesin family. Can form homodimers and interacts with microtubules. Interacts with GLI1 and SMO. Interacts with GLI2, GLI3 and SUFU. Interacts with NPHP1. Interacts with SMO and DLG5 (via PDZ4 or guanylate kinase-like domain). Polyubiquitinated by UBR3. In terms of tissue distribution, expressed in heart, lung, liver, kidney, testis, spleen and cerebellum.

It localises to the cell projection. The protein resides in the cilium. Its subcellular location is the cytoplasm. It is found in the cytoskeleton. The protein localises to the cilium basal body. Functionally, essential for hedgehog signaling regulation: acts both as a negative and a positive regulator of sonic hedgehog (Shh) and Indian hedgehog (Ihh) pathways, acting downstream of SMO, through both SUFU-dependent and -independent mechanisms. Involved in the regulation of microtubular dynamics. Required for proper organization of the ciliary tip and control of ciliary localization of SUFU-GLI2 complexes. Required for localization of GLI3 to cilia in response to Shh. Negatively regulates Shh signaling by preventing inappropriate activation of the transcriptional activator GLI2 in the absence of ligand. Positively regulates Shh signaling by preventing the processing of the transcription factor GLI3 into its repressor form. In keratinocytes, promotes the dissociation of SUFU-GLI2 complexes, GLI2 nuclear translocation and Shh signaling activation. Involved in the regulation of epidermal differentiation and chondrocyte development. This chain is Kinesin-like protein KIF7 (Kif7), found in Mus musculus (Mouse).